A 333-amino-acid chain; its full sequence is Phosphate acyltransferase (333 aa).

This sequence belongs to the PlsX family. As to quaternary structure, homodimer. Probably interacts with PlsY.

Its subcellular location is the cytoplasm. It catalyses the reaction a fatty acyl-[ACP] + phosphate = an acyl phosphate + holo-[ACP]. Its pathway is lipid metabolism; phospholipid metabolism. Its function is as follows. Catalyzes the reversible formation of acyl-phosphate (acyl-PO(4)) from acyl-[acyl-carrier-protein] (acyl-ACP). This enzyme utilizes acyl-ACP as fatty acyl donor, but not acyl-CoA. In Aliarcobacter butzleri (strain RM4018) (Arcobacter butzleri), this protein is Phosphate acyltransferase.